The following is a 772-amino-acid chain: Acetamidase regulatory protein (772 aa).

A compositionally biased stretch (polar residues) spans 1-16 (MSSTAQKNSLSPTGNG). Positions 1 to 23 (MSSTAQKNSLSPTGNGVTKRKSG) are disordered. The zn(2)-C6 fungal-type DNA-binding region spans 26–59 (ACVHCHRRKVRCDARIVGLPCSNCRSSGKTDCRI). Disordered stretches follow at residues 78 to 99 (RCRP…TISE), 114 to 148 (AAAP…QECH), and 627 to 690 (ATSE…QTAV). The span at 114–123 (AAAPPASVAP) shows a compositional bias: low complexity. Composition is skewed to polar residues over residues 124–144 (NVQS…SPQA) and 634–658 (PFSS…QHSS). Residues 671–686 (LLPSYDSPTPDSTSLP) are compositionally biased toward low complexity.

The protein localises to the nucleus. In terms of biological role, positively regulates the expression of genes involved in the catabolism of certain amides, omega amino acids, and lactams. This is Acetamidase regulatory protein (amdR) from Aspergillus fumigatus (strain ATCC MYA-4609 / CBS 101355 / FGSC A1100 / Af293) (Neosartorya fumigata).